A 236-amino-acid polypeptide reads, in one-letter code: MSSSKYKRVMLKISGEALSGKKGFGFDFDVTQRIAKEIKEIVDMGIEVGAVVGGGNIWRGRNGEEMDRTTADYMGMLATCINALALQDSLENIGVKTRVQTAIEMKEVAEPFIRRRAMRHLEKKRVVIFAAGTGNPYFSTDTTAALRAAEIEADAILLAKKVDGVYDKDPNKYDDAKKFDKLTYIEVLEKGLQVMDSTATSLCMDNNIPILVFGLDKPNNIKKVIMGEQIGTIVSK.

12-15 is a binding site for ATP; sequence KISG. Residues 20-25 are involved in allosteric activation by GTP; the sequence is GKKGFG. Glycine 54 is a UMP binding site. ATP-binding residues include glycine 55 and arginine 59. Residues aspartate 72 and 133-140 contribute to the UMP site; that span reads TGNPYFST. ATP-binding residues include tyrosine 166 and aspartate 169.

This sequence belongs to the UMP kinase family. In terms of assembly, homohexamer.

The protein resides in the cytoplasm. The catalysed reaction is UMP + ATP = UDP + ADP. Its pathway is pyrimidine metabolism; CTP biosynthesis via de novo pathway; UDP from UMP (UMPK route): step 1/1. With respect to regulation, allosterically activated by GTP. Inhibited by UTP. Catalyzes the reversible phosphorylation of UMP to UDP. In Clostridium novyi (strain NT), this protein is Uridylate kinase.